Here is a 586-residue protein sequence, read N- to C-terminus: Guanylate-binding protein 5 (586 aa).

Residues 1 to 306 (MALEIHMSDP…TYVNAISSGD (306 aa)) are NLRP3-binding. A GTPase domain (Globular) region spans residues 1–309 (MALEIHMSDP…NAISSGDLPC (309 aa)). Residues 35–276 (TQPVVVVAIV…FCSYIFSHSM (242 aa)) form the GB1/RHD3-type G domain. GTP-binding positions include 45 to 52 (GLYRTGKS), 67 to 69 (VAS), 181 to 182 (RD), and Leu-245. The segment at 529–586 (MEIAKQNWLAEQQKMQEQQMQEQAAQLSTTFQAQNRSLLSELQHAQRTVNNDDPCVLL) is required for tetramerization, but not for dimerization. At Cys-583 the chain carries Cysteine methyl ester. Cys-583 carries the S-geranylgeranyl cysteine lipid modification. The propeptide at 584–586 (VLL) is removed in mature form.

The protein belongs to the TRAFAC class dynamin-like GTPase superfamily. GB1/RHD3 GTPase family. GB1 subfamily. In terms of assembly, homodimer; homodimerizes upon GTP-binding, forming a close face-to-face dimer. Heterodimer with other family members, including GBP1, GBP2, GBP3 and GBP4. May also form tetramers (dimer of dimers) in the presence of GTP. Interacts with NLRP3, possibly in its tetrameric form, and promotes PYCARD/ASC polymerization. As to quaternary structure, homodimer; homodimerizes upon GTP-binding. GDP-bound form remains homodimeric. Homodimer; homodimerizes upon GTP-binding. GDP-bound is monomeric. Isoprenylation is required for proper subcellular location. Expressed in peripheral blood monocytes (at protein level).

It is found in the cytoplasmic vesicle membrane. The protein resides in the golgi apparatus membrane. Its subcellular location is the cytoplasm. The catalysed reaction is GTP + H2O = GDP + phosphate + H(+). In terms of biological role, interferon (IFN)-inducible GTPase that plays important roles in innate immunity against a diverse range of bacterial, viral and protozoan pathogens. Hydrolyzes GTP, but in contrast to other family members, does not produce GMP. Following infection, recruited to the pathogen-containing vacuoles or vacuole-escaped bacteria and acts as a positive regulator of inflammasome assembly by promoting the release of inflammasome ligands from bacteria. Acts by promoting lysis of pathogen-containing vacuoles, releasing pathogens into the cytosol. Following pathogen release in the cytosol, promotes recruitment of proteins that mediate bacterial cytolysis: this liberates ligands that are detected by inflammasomes, such as lipopolysaccharide (LPS) that activates the non-canonical CASP4/CASP11 inflammasome or double-stranded DNA (dsDNA) that activates the AIM2 inflammasome. As an activator of NLRP3 inflammasome assembly: promotes selective NLRP3 inflammasome assembly in response to microbial and soluble, but not crystalline, agents. Independently of its GTPase activity, acts as an inhibitor of various viruses infectivity, such as HIV-1, Zika and influenza A viruses, by inhibiting FURIN-mediated maturation of viral envelope proteins. Its function is as follows. Antigenic tumor-specific truncated splice form. The polypeptide is Guanylate-binding protein 5 (Homo sapiens (Human)).